An 89-amino-acid polypeptide reads, in one-letter code: Small ribosomal subunit protein uS15 (89 aa).

This sequence belongs to the universal ribosomal protein uS15 family. As to quaternary structure, part of the 30S ribosomal subunit. Forms a bridge to the 50S subunit in the 70S ribosome, contacting the 23S rRNA.

In terms of biological role, one of the primary rRNA binding proteins, it binds directly to 16S rRNA where it helps nucleate assembly of the platform of the 30S subunit by binding and bridging several RNA helices of the 16S rRNA. Functionally, forms an intersubunit bridge (bridge B4) with the 23S rRNA of the 50S subunit in the ribosome. This chain is Small ribosomal subunit protein uS15, found in Nitratidesulfovibrio vulgaris (strain DSM 19637 / Miyazaki F) (Desulfovibrio vulgaris).